The chain runs to 540 residues: GMP synthase [glutamine-hydrolyzing] (540 aa).

Residues lysine 29–aspartate 222 form the Glutamine amidotransferase type-1 domain. Cysteine 106 functions as the Nucleophile in the catalytic mechanism. Residues histidine 196 and glutamate 198 contribute to the active site. The GMPS ATP-PPase domain maps to tryptophan 223–arginine 415. Residue serine 250–alanine 256 coordinates ATP.

Homodimer.

It carries out the reaction XMP + L-glutamine + ATP + H2O = GMP + L-glutamate + AMP + diphosphate + 2 H(+). Its pathway is purine metabolism; GMP biosynthesis; GMP from XMP (L-Gln route): step 1/1. Its function is as follows. Catalyzes the synthesis of GMP from XMP. The protein is GMP synthase [glutamine-hydrolyzing] of Rhodopseudomonas palustris (strain HaA2).